The sequence spans 853 residues: DNA mismatch repair protein MutS (853 aa).

Residue 613–620 participates in ATP binding; sequence GPNMGGKS.

This sequence belongs to the DNA mismatch repair MutS family.

This protein is involved in the repair of mismatches in DNA. It is possible that it carries out the mismatch recognition step. This protein has a weak ATPase activity. In Vibrio parahaemolyticus serotype O3:K6 (strain RIMD 2210633), this protein is DNA mismatch repair protein MutS.